Consider the following 204-residue polypeptide: Small ribosomal subunit protein uS7 (204 aa).

The protein belongs to the universal ribosomal protein uS7 family. Part of the 30S ribosomal subunit.

Its function is as follows. One of the primary rRNA binding proteins, it binds directly to 16S rRNA where it nucleates assembly of the head domain of the 30S subunit. Is located at the subunit interface close to the decoding center. This Methanoregula boonei (strain DSM 21154 / JCM 14090 / 6A8) protein is Small ribosomal subunit protein uS7.